Consider the following 424-residue polypeptide: Serine/threonine-protein kinase H1 (424 aa).

Residue Gly-2 is the site of N-myristoyl glycine attachment. Cys-3 is lipidated: S-palmitoyl cysteine. The segment at Ser-56 to Arg-80 is disordered. The 258-residue stretch at Tyr-98–Val-355 folds into the Protein kinase domain. ATP contacts are provided by residues Ile-104–Val-112 and Lys-127. The Proton acceptor role is filled by Asp-218. Positions Arg-378 to Arg-407 are disordered. Phosphoserine; by autocatalysis is present on residues Ser-380 and Ser-381. Low complexity predominate over residues Ser-385–Thr-398.

Belongs to the protein kinase superfamily. CAMK Ser/Thr protein kinase family. Homodimer. In terms of processing, autophosphorylated on serine residues. Post-translationally, myristoylated. Required for membrane association. Prerequisite for palmitoylation to occur. Palmitoylated. In terms of tissue distribution, expressed in all tissues and cell lines tested with the highest level of abundance in testis.

The protein resides in the golgi apparatus. It localises to the cytoplasm. It is found in the cytoskeleton. Its subcellular location is the microtubule organizing center. The protein localises to the centrosome. The protein resides in the nucleus speckle. It localises to the endoplasmic reticulum membrane. It is found in the cell membrane. The enzyme catalyses L-seryl-[protein] + ATP = O-phospho-L-seryl-[protein] + ADP + H(+). It carries out the reaction L-threonyl-[protein] + ATP = O-phospho-L-threonyl-[protein] + ADP + H(+). Activity depends on Ca(2+) concentration. Functionally, serine/threonine protein kinase that may be involved in the regulation of pre-mRNA processing. It may phosphorylate components of nuclear splice factor compartments (SFC), such as non-snRNP splicing factors containing a serine/arginine-rich domain (SR proteins). Reversible phosphorylation of SR proteins may cause their release into the nucleoplasm and change their local concentration, thereby influencing alternative splicing. This is Serine/threonine-protein kinase H1 (PSKH1) from Homo sapiens (Human).